Reading from the N-terminus, the 660-residue chain is Tripartite terminase subunit 3 (660 aa).

A Walker A motif motif is present at residues 203-210 (VPRRHGKT). Residues 294–299 (ILLVDE) carry the Walker B motif motif. Glu299 acts as the For ATPase activity in catalysis. Residues Asp452, Glu523, and Asp637 each act as for nuclease activity in the active site.

This sequence belongs to the herpesviridae TRM3 protein family. As to quaternary structure, interacts with the terminase subunits TRM1 and TRM2. Interacts with portal protein.

Its subcellular location is the host nucleus. Its function is as follows. Component of the molecular motor that translocates viral genomic DNA in empty capsid during DNA packaging. Forms a tripartite terminase complex together with TRM1 and TRM2 in the host cytoplasm. Once the complex reaches the host nucleus, it interacts with the capsid portal vertex. This portal forms a ring in which genomic DNA is translocated into the capsid. TRM3 carries an RNase H-like nuclease activity that plays an important role for the cleavage of concatemeric viral DNA into unit length genomes. The polypeptide is Tripartite terminase subunit 3 (Elephas maximus (Indian elephant)).